The chain runs to 136 residues: ATP synthase epsilon chain, plastid (136 aa).

The protein belongs to the ATPase epsilon chain family. As to quaternary structure, F-type ATPases have 2 components, CF(1) - the catalytic core - and CF(0) - the membrane proton channel. CF(1) has five subunits: alpha(3), beta(3), gamma(1), delta(1), epsilon(1). CF(0) has three main subunits: a, b and c.

It is found in the plastid thylakoid membrane. Its function is as follows. Produces ATP from ADP in the presence of a proton gradient across the membrane. The protein is ATP synthase epsilon chain, plastid of Cuscuta reflexa (Southern Asian dodder).